A 573-amino-acid polypeptide reads, in one-letter code: Urease subunit alpha 2 (573 aa).

The Urease domain occupies 135 to 573 (GGMDTHVHYI…ISLNQLYFFS (439 aa)). The Ni(2+) site is built by His140, His142, and Lys223. Lys223 carries the post-translational modification N6-carboxylysine. Position 225 (His225) interacts with substrate. His252 and His278 together coordinate Ni(2+). The active-site Proton donor is the His326. Asp366 provides a ligand contact to Ni(2+).

It belongs to the metallo-dependent hydrolases superfamily. Urease alpha subunit family. As to quaternary structure, heterotrimer of UreA (gamma), UreB (beta) and UreC (alpha) subunits. Three heterotrimers associate to form the active enzyme. It depends on Ni cation as a cofactor. In terms of processing, carboxylation allows a single lysine to coordinate two nickel ions.

Its subcellular location is the cytoplasm. The enzyme catalyses urea + 2 H2O + H(+) = hydrogencarbonate + 2 NH4(+). Its pathway is nitrogen metabolism; urea degradation; CO(2) and NH(3) from urea (urease route): step 1/1. This is Urease subunit alpha 2 from Brucella melitensis biotype 1 (strain ATCC 23456 / CCUG 17765 / NCTC 10094 / 16M).